The sequence spans 430 residues: Asparagine--tRNA ligase (430 aa).

This sequence belongs to the class-II aminoacyl-tRNA synthetase family. As to quaternary structure, homodimer.

Its subcellular location is the cytoplasm. The catalysed reaction is tRNA(Asn) + L-asparagine + ATP = L-asparaginyl-tRNA(Asn) + AMP + diphosphate + H(+). This Staphylococcus epidermidis (strain ATCC 35984 / DSM 28319 / BCRC 17069 / CCUG 31568 / BM 3577 / RP62A) protein is Asparagine--tRNA ligase.